Here is a 907-residue protein sequence, read N- to C-terminus: Protein translocase subunit SecA (907 aa).

Residues Gln87, 105–109 (GEGKT), and Asp512 each bind ATP. The interval 862–885 (AENQLDDGHSSDQNHSPMVRDERK) is disordered. A compositionally biased stretch (basic and acidic residues) spans 867 to 885 (DDGHSSDQNHSPMVRDERK). The Zn(2+) site is built by Cys892, Cys894, Cys903, and His904.

Belongs to the SecA family. As to quaternary structure, monomer and homodimer. Part of the essential Sec protein translocation apparatus which comprises SecA, SecYEG and auxiliary proteins SecDF-YajC and YidC. Zn(2+) is required as a cofactor.

The protein localises to the cell inner membrane. It localises to the cytoplasm. The enzyme catalyses ATP + H2O + cellular proteinSide 1 = ADP + phosphate + cellular proteinSide 2.. Part of the Sec protein translocase complex. Interacts with the SecYEG preprotein conducting channel. Has a central role in coupling the hydrolysis of ATP to the transfer of proteins into and across the cell membrane, serving both as a receptor for the preprotein-SecB complex and as an ATP-driven molecular motor driving the stepwise translocation of polypeptide chains across the membrane. The chain is Protein translocase subunit SecA from Aliivibrio salmonicida (strain LFI1238) (Vibrio salmonicida (strain LFI1238)).